The sequence spans 609 residues: DNA polymerase alpha subunit B (609 aa).

Position 155 is a phosphoserine (Ser155). Residue Thr164 is modified to Phosphothreonine. Residues Ser166 and Ser168 each carry the phosphoserine modification.

It belongs to the DNA polymerase alpha subunit B family. Component of the alpha DNA polymerase complex (also known as the alpha DNA polymerase-primase complex) consisting of four subunits: the catalytic subunit PolA1, the regulatory subunit PolA2, and the primase complex subunits Prim1 and Prim2 respectively. PolA1 associates with the DNA primase complex before association with PolA2. Post-translationally, phosphorylated in embryos until cycle 13. As to expression, expressed in embryos (at protein level).

It localises to the nucleus. In terms of biological role, accessory subunit of the DNA polymerase alpha complex (also known as the alpha DNA polymerase-primase complex) which plays an essential role in the initiation of DNA synthesis. During the S phase of the cell cycle, the DNA polymerase alpha complex (composed of a catalytic subunit PolA1, an accessory subunit PolA2 and two primase subunits, the catalytic subunit Prim1 and the regulatory subunit Prim2) is recruited to DNA at the replicative forks. The primase subunit of the polymerase alpha complex initiates DNA synthesis by oligomerising short RNA primers on both leading and lagging strands. These primers are initially extended by the polymerase alpha catalytic subunit and subsequently transferred to polymerase delta and polymerase epsilon for processive synthesis on the lagging and leading strand, respectively. In Drosophila melanogaster (Fruit fly), this protein is DNA polymerase alpha subunit B.